A 384-amino-acid chain; its full sequence is Cell division protein FtsZ (384 aa).

GTP is bound by residues 20–24 (GGGGN), 107–109 (GTG), Glu138, Arg142, and Asn186.

Belongs to the FtsZ family. Homodimer. Polymerizes to form a dynamic ring structure in a strictly GTP-dependent manner. Interacts directly with several other division proteins.

The protein resides in the cytoplasm. Its function is as follows. Essential cell division protein that forms a contractile ring structure (Z ring) at the future cell division site. The regulation of the ring assembly controls the timing and the location of cell division. One of the functions of the FtsZ ring is to recruit other cell division proteins to the septum to produce a new cell wall between the dividing cells. Binds GTP and shows GTPase activity. In Buchnera aphidicola subsp. Schizaphis graminum (strain Sg), this protein is Cell division protein FtsZ.